Reading from the N-terminus, the 333-residue chain is Fructose-1,6-bisphosphatase class 1 (333 aa).

Mg(2+) is bound by residues Glu-92, Asp-113, Leu-115, and Asp-116. Substrate-binding positions include 116–119, Asn-209, Tyr-242, and Lys-272; that span reads DGSS. Residue Glu-278 participates in Mg(2+) binding.

It belongs to the FBPase class 1 family. As to quaternary structure, homotetramer. Mg(2+) is required as a cofactor.

Its subcellular location is the cytoplasm. The enzyme catalyses beta-D-fructose 1,6-bisphosphate + H2O = beta-D-fructose 6-phosphate + phosphate. Its pathway is carbohydrate biosynthesis; Calvin cycle. The chain is Fructose-1,6-bisphosphatase class 1 from Chlorobium phaeobacteroides (strain BS1).